Here is a 404-residue protein sequence, read N- to C-terminus: Tryptophan synthase beta chain (404 aa).

N6-(pyridoxal phosphate)lysine is present on K91.

This sequence belongs to the TrpB family. In terms of assembly, tetramer of two alpha and two beta chains. The cofactor is pyridoxal 5'-phosphate.

It catalyses the reaction (1S,2R)-1-C-(indol-3-yl)glycerol 3-phosphate + L-serine = D-glyceraldehyde 3-phosphate + L-tryptophan + H2O. It functions in the pathway amino-acid biosynthesis; L-tryptophan biosynthesis; L-tryptophan from chorismate: step 5/5. The beta subunit is responsible for the synthesis of L-tryptophan from indole and L-serine. The chain is Tryptophan synthase beta chain from Clavibacter michiganensis subsp. michiganensis (strain NCPPB 382).